A 72-amino-acid polypeptide reads, in one-letter code: Prophage late control protein OgrK (72 aa).

In terms of biological role, cryptic version of the phage P2 OGR protein which acts as an activator of P2 late transcription. This is Prophage late control protein OgrK (ogrK) from Escherichia coli (strain K12).